A 350-amino-acid polypeptide reads, in one-letter code: Chlorophyll a/b light-harvesting protein PcbA (350 aa).

Transmembrane regions (helical) follow at residues 26–46 (LSAH…ITLF), 62–82 (LILI…GQVV), 87–107 (YFVI…GALY), 214–234 (IAVV…FPWA), 248–268 (LSAS…FSAV), and 309–329 (LCNV…WHAL).

Belongs to the PsbB/PsbC family. IsiA/Pcb subfamily. The antenna complex consists of chlorophylls (a and b) and chlorophyll a/b binding proteins. The cofactor is chlorophyll a. Chlorophyll b serves as cofactor.

The protein localises to the cellular thylakoid membrane. In terms of biological role, the antenna complex functions as a light receptor, it captures and delivers excitation energy to photosystems II and I. The Prochlorales pcb genes are not related to higher plant LHCs. This is Chlorophyll a/b light-harvesting protein PcbA (pcbA) from Prochlorothrix hollandica.